Consider the following 699-residue polypeptide: SPS-sensor serine protease component SSY5 (699 aa).

Disordered stretches follow at residues 1–113 (MVRF…LQGF) and 128–158 (PVKEEESQDTQNTLDVSSSTSSTLATSENAR). Positions 1–381 (MVRFFGLNKK…YCVKDYIKKA (381 aa)) are excised as a propeptide. Polar residues predominate over residues 24–38 (NEQNAAETSSSNVSG). Residues 39–51 (NEERIDPNSHDTN) show a composition bias toward basic and acidic residues. Residues 61–78 (STTFGSSIQSSSIFSRGR) show a composition bias toward low complexity. Polar residues predominate over residues 83-93 (TGASSSMATSE). Low complexity-rich tracts occupy residues 97-109 (HSSGHSGSKNSKN) and 144-154 (SSSTSSTLATS). The tract at residues 459–699 (FAITCAHVVL…QWDIDPQLDG (241 aa)) is serine protease. Residues H465, D545, and S640 each act as charge relay system in the active site.

This sequence belongs to the peptidase S64 family. Component of the plasma membrane SPS (SSY1-PTR3-SSY5) amino acid sensor complex. In terms of processing, the propeptide is autoproteolytically cleaved from the catalytic domain but remains associated, forming an inactive protease complex. This processing occurs even in the absence of signaling.

The protein localises to the cell membrane. Functionally, protease component of the SPS-sensor system, which regulates the expression of several amino acid-metabolizing enzymes and amino acid- and peptide-permeases in response to extracellular amino acid levels by controlling the activity of two transcription factors, STP1 and STP2. Catalyzes the activation of these transcription factors, which are synthesized as latent cytoplasmic precursors, by proteolytic removal of an N-terminal inhibitory domain containing cytoplasmic retention motifs. SSY5 binds as an inactive protease complex to STP1. In response to extracellular amino acids and dependent on the other SPS-sensor components, the inhibitory propeptide is induced to dissociate, and thereby enables the catalytic domain to process STP1. The polypeptide is SPS-sensor serine protease component SSY5 (SSY5) (Saccharomyces cerevisiae (strain ATCC 204508 / S288c) (Baker's yeast)).